The chain runs to 439 residues: GTPase Obg (439 aa).

An Obg domain is found at 5–164 (TDFFDQATIV…LTLELELKML (160 aa)). Positions 165–335 (ADVGLVGFPN…LLRRVADLLR (171 aa)) constitute an OBG-type G domain. GTP contacts are provided by residues 171–178 (GFPNAGKS), 196–200 (FTTLT), 217–220 (DIPG), 287–290 (NKAD), and 316–318 (SAA). Mg(2+) is bound by residues S178 and T198. An OCT domain is found at 356-433 (LPEVDENAFT…IGRAELVWDD (78 aa)).

The protein belongs to the TRAFAC class OBG-HflX-like GTPase superfamily. OBG GTPase family. As to quaternary structure, monomer. It depends on Mg(2+) as a cofactor.

Its subcellular location is the cytoplasm. Functionally, an essential GTPase which binds GTP, GDP and possibly (p)ppGpp with moderate affinity, with high nucleotide exchange rates and a fairly low GTP hydrolysis rate. Plays a role in control of the cell cycle, stress response, ribosome biogenesis and in those bacteria that undergo differentiation, in morphogenesis control. This chain is GTPase Obg, found in Chloroflexus aurantiacus (strain ATCC 29364 / DSM 637 / Y-400-fl).